Here is a 287-residue protein sequence, read N- to C-terminus: Probable F-box protein At5g04010 (287 aa).

Residues 50 to 101 (PSPPSWEILCLVGPYMDPESLAVASCVSTTWSKCFSSEDLWKSLPATRHSIF) enclose the F-box; degenerate domain.

This is Probable F-box protein At5g04010 (NSFBx) from Arabidopsis thaliana (Mouse-ear cress).